A 503-amino-acid chain; its full sequence is Maturase K (503 aa).

This sequence belongs to the intron maturase 2 family. MatK subfamily.

The protein resides in the plastid. The protein localises to the chloroplast. Functionally, usually encoded in the trnK tRNA gene intron. Probably assists in splicing its own and other chloroplast group II introns. The chain is Maturase K from Psilotum nudum (Whisk fern).